The following is a 347-amino-acid chain: Fructose-1,6-bisphosphatase class 1 2 (347 aa).

Mg(2+) is bound by residues glutamate 92, aspartate 111, leucine 113, and aspartate 114. Substrate-binding positions include 114–117 (DGSS) and asparagine 202. Glutamate 274 provides a ligand contact to Mg(2+).

Belongs to the FBPase class 1 family. In terms of assembly, homotetramer. Mg(2+) serves as cofactor.

Its subcellular location is the cytoplasm. It carries out the reaction beta-D-fructose 1,6-bisphosphate + H2O = beta-D-fructose 6-phosphate + phosphate. It participates in carbohydrate biosynthesis; Calvin cycle. In Bradyrhizobium sp. (strain BTAi1 / ATCC BAA-1182), this protein is Fructose-1,6-bisphosphatase class 1 2.